Here is a 468-residue protein sequence, read N- to C-terminus: Argininosuccinate lyase (468 aa).

Belongs to the lyase 1 family. Argininosuccinate lyase subfamily.

The protein localises to the cytoplasm. The enzyme catalyses 2-(N(omega)-L-arginino)succinate = fumarate + L-arginine. It functions in the pathway amino-acid biosynthesis; L-arginine biosynthesis; L-arginine from L-ornithine and carbamoyl phosphate: step 3/3. This is Argininosuccinate lyase from Paraburkholderia phytofirmans (strain DSM 17436 / LMG 22146 / PsJN) (Burkholderia phytofirmans).